A 203-amino-acid chain; its full sequence is Small ribosomal subunit protein uS4 (203 aa).

Residues Leu-93 to Leu-158 form the S4 RNA-binding domain.

Belongs to the universal ribosomal protein uS4 family. As to quaternary structure, part of the 30S ribosomal subunit. Contacts protein S5. The interaction surface between S4 and S5 is involved in control of translational fidelity.

Functionally, one of the primary rRNA binding proteins, it binds directly to 16S rRNA where it nucleates assembly of the body of the 30S subunit. With S5 and S12 plays an important role in translational accuracy. This Akkermansia muciniphila (strain ATCC BAA-835 / DSM 22959 / JCM 33894 / BCRC 81048 / CCUG 64013 / CIP 107961 / Muc) protein is Small ribosomal subunit protein uS4.